A 922-amino-acid polypeptide reads, in one-letter code: Cell surface glycoprotein 2 (922 aa).

Residues 1–23 form the signal peptide; that stretch reads MTGNSDKVRSLFLTALMVFSVFA. Asparagine 37, asparagine 56, asparagine 110, asparagine 220, asparagine 251, asparagine 262, and asparagine 292 each carry an N-linked (GlcNAc...) asparagine glycan. Residue asparagine 307 is glycosylated (N-linked (GalNAc...) asparagine). Asparagine 319, asparagine 344, asparagine 396, asparagine 437, asparagine 490, asparagine 523, asparagine 557, asparagine 574, asparagine 587, asparagine 616, asparagine 700, asparagine 717, asparagine 809, asparagine 838, and asparagine 847 each carry an N-linked (GlcNAc...) asparagine glycan. The tract at residues 816–899 is disordered; the sequence is PHQDTNGNEE…GTETTEAEGP (84 aa). Residues 835–850 show a composition bias toward polar residues; the sequence is YTQNGSAVTDSANVTV. Positions 853–887 are enriched in acidic residues; the sequence is EEPEDTPEDTPEDTPEDTPEDTPEDTPADTPEDTP. Low complexity predominate over residues 888 to 899; sequence DTGTETTEAEGP. The helical transmembrane segment at 898–918 threads the bilayer; the sequence is GPGFTAAIALIALVAAALLAV. The PGF sorting signal signature appears at 899–901; it reads PGF.

This sequence belongs to the halobacterial S-layer protein family. N-glycosylated on Asn-307; this N-linked glycan is a branched trisaccharide containing 2-amino-6-sulfo-2,6-dideoxy-glucose (sulfoquinovosamine). In terms of processing, O-glycosylated on Thr residues within the DTPE repeats in the C-terminal region; glycans consist of Glc-Gal disaccharides. Post-translationally, cleaved by the archaeosortase ArtA at the C-terminus, with removal of a short hydrophobic segment. Lipidation.

It localises to the secreted. It is found in the cell wall. Its subcellular location is the S-layer. The protein localises to the cell membrane. Functionally, S-layer protein. The S-layer is a paracrystalline mono-layered assembly of proteins which coat the surface of the cell. In H.hispanica, the S-layer contains two different glycoproteins, Slg1 and Slg2, which share highly similar amino acid sequences. This Haloarcula hispanica (strain ATCC 33960 / DSM 4426 / JCM 8911 / NBRC 102182 / NCIMB 2187 / VKM B-1755) protein is Cell surface glycoprotein 2.